The primary structure comprises 380 residues: Cytochrome b (380 aa).

4 helical membrane-spanning segments follow: residues Phe-34–Met-54, Trp-78–Ile-99, Trp-114–Leu-134, and Phe-179–Thr-199. The heme b site is built by His-84 and His-98. 2 residues coordinate heme b: His-183 and His-197. His-202 contacts a ubiquinone. Transmembrane regions (helical) follow at residues Ser-227–Ser-247, Leu-289–His-309, Leu-321–Ser-341, and Phe-348–Pro-368.

Belongs to the cytochrome b family. As to quaternary structure, the cytochrome bc1 complex contains 11 subunits: 3 respiratory subunits (MT-CYB, CYC1 and UQCRFS1), 2 core proteins (UQCRC1 and UQCRC2) and 6 low-molecular weight proteins (UQCRH/QCR6, UQCRB/QCR7, UQCRQ/QCR8, UQCR10/QCR9, UQCR11/QCR10 and a cleavage product of UQCRFS1). This cytochrome bc1 complex then forms a dimer. The cofactor is heme b.

The protein resides in the mitochondrion inner membrane. Component of the ubiquinol-cytochrome c reductase complex (complex III or cytochrome b-c1 complex) that is part of the mitochondrial respiratory chain. The b-c1 complex mediates electron transfer from ubiquinol to cytochrome c. Contributes to the generation of a proton gradient across the mitochondrial membrane that is then used for ATP synthesis. The chain is Cytochrome b (MT-CYB) from Caracara plancus (Southern caracara).